The chain runs to 260 residues: MAAAHTPREENVYMAKLAEQAERYEEMVEFMEKVSANADSEELTVEERNLLSVAYKNVIGARRASWRIISSIEQKEESRGNEDHVAVIRDYRSKIESELSNICDGILKLLDTRLIPSASSGDSKVFYLKMKGDYHRYLAEFKTGAERKEAAESTLTGYKSAQDIANAELPPTHPIRLGLALNFSVFYYEILNSPDRACNLAKQAFDEAIAELDTLGEESYKDSTLIMQLLRDNLTLWTSDMQDDGADEIKEAAPKADEQQ.

The protein belongs to the 14-3-3 family.

This is 14-3-3-like protein from Pisum sativum (Garden pea).